The chain runs to 274 residues: MRKSILSFLEKKGKNEKITMVSAYDYHSAKILDNCDIDIILVGDSLAMIVLGMQDTLSVTMDEMLIFTKAVSRGAKKSFVLADMPFMSYQGSDRDAILNASRFIKESHANGVKVEGGIEIASKIKLISQSGIPVVAHLGLTPQAVNILGGYRIQGKDLQSAQKIIDDAKAVQDSGACMLVLECVPIKLAQKISSILEIPTIGIGSGKYCDGQVLVYHDLLGLNKDFKAKFVKHFDKIDPQIGVEKYRDEVKSGIFPSEEHSFDYLGEELLDKLY.

2 residues coordinate Mg(2+): D44 and D83. 3-methyl-2-oxobutanoate contacts are provided by residues 44 to 45 (DS), D83, and K113. E115 is a binding site for Mg(2+). E182 (proton acceptor) is an active-site residue.

This sequence belongs to the PanB family. Homodecamer; pentamer of dimers. The cofactor is Mg(2+).

The protein localises to the cytoplasm. The catalysed reaction is 3-methyl-2-oxobutanoate + (6R)-5,10-methylene-5,6,7,8-tetrahydrofolate + H2O = 2-dehydropantoate + (6S)-5,6,7,8-tetrahydrofolate. It functions in the pathway cofactor biosynthesis; (R)-pantothenate biosynthesis; (R)-pantoate from 3-methyl-2-oxobutanoate: step 1/2. In terms of biological role, catalyzes the reversible reaction in which hydroxymethyl group from 5,10-methylenetetrahydrofolate is transferred onto alpha-ketoisovalerate to form ketopantoate. The sequence is that of 3-methyl-2-oxobutanoate hydroxymethyltransferase from Campylobacter jejuni subsp. doylei (strain ATCC BAA-1458 / RM4099 / 269.97).